Here is a 132-residue protein sequence, read N- to C-terminus: MEALKADVTQGLSKGSLITCADNTGARELKVISVAGYSGTKNRHPKAGIGDKVTVSVTKGTPEMRRQVLEAVVVRQRKPIRRPNGTRVKFEDNAAVIIDDLDEPRGTEIKGPVAREVAERFGSIASTATMIV.

It belongs to the universal ribosomal protein uL14 family. Part of the 50S ribosomal subunit. Forms a cluster with proteins L3 and L24e, part of which may contact the 16S rRNA in 2 intersubunit bridges.

In terms of biological role, binds to 23S rRNA. Forms part of two intersubunit bridges in the 70S ribosome. The protein is Large ribosomal subunit protein uL14 of Halorubrum lacusprofundi (strain ATCC 49239 / DSM 5036 / JCM 8891 / ACAM 34).